We begin with the raw amino-acid sequence, 273 residues long: Undecaprenyl-diphosphatase (273 aa).

The next 7 membrane-spanning stretches (helical) occupy residues 13–35, 45–62, 82–102, 108–128, 186–206, 219–239, and 250–270; these read GLVE…VFGN, VFEI…VFEY, FVLN…LFGK, LFNP…ILWV, TEFS…YDVL, LILI…KALL, and FAYY…SGWI.

It belongs to the UppP family.

The protein localises to the cell inner membrane. The enzyme catalyses di-trans,octa-cis-undecaprenyl diphosphate + H2O = di-trans,octa-cis-undecaprenyl phosphate + phosphate + H(+). Its function is as follows. Catalyzes the dephosphorylation of undecaprenyl diphosphate (UPP). Confers resistance to bacitracin. This Neisseria meningitidis serogroup A / serotype 4A (strain DSM 15465 / Z2491) protein is Undecaprenyl-diphosphatase.